The chain runs to 750 residues: MENLFGAKRLTATVGGKEIIMETGRLANQADGAVWIQCGGTVVLCTVCTQPLEREISFFPLVVDYTEKMYAAGRIPGSFFRREIGRPSERETLVSRLIDRPLRPLFPKGFTNEVQILANVISADQENDSDVLALCGSSAAVMLSSVPFEAPVAGARVCRIDGEFVLNPTITEAAKADLNLVVAANRDALVMVEGEADFVPEEVIAQALEWAHREVQPIIDMQEKLRELAGKAKIEFVAPEEDTELKEKAEALATADLAAALQVREKMARKEAKKAVKEKVKAALLQDPAFAETPERLAALGDILSSLEKRIVRQRILKEGLRIDGRDTKTVRPIIIEAGALPRAHGSAIFSRGETKSLVVTTLGSTTDEQRMDSLTGDVTKRFMLHYNFPPYSVGEVKPVRVSRREIGHGALAERALRPVLPSPDSFPFTLRVVSETMESNGSSSMAAVCGGSLSLMDAGVPVKAPVAGIAMGLIKEDDQFIVLTDILGDEDALGDMDFKIAGTAEGVTAVQMDIKIDGLPAEVMGRALAQAREARLHILNEMAKVLPEPRQALSKYAPQLSVVEVNPEIIRVIIGPGGKNIKAITSATGASIDIEDSGRISIFAPTKESMDMAREMVMYYDQRPELGKNYTAKVRKIMEIGAIVEILPNCEALIHISQLDTSRVEKTEDVVQLGQDVEVKVIEINDGRVRASRKAVMLEAQGVEWDPADTARPPRKPRDRDDRGDRGGRGDRGDRGGRNGRGGDRRDRR.

Residues aspartate 492 and aspartate 498 each coordinate Mg(2+). In terms of domain architecture, KH spans 559–618 (PQLSVVEVNPEIIRVIIGPGGKNIKAITSATGASIDIEDSGRISIFAPTKESMDMAREMV). The 68-residue stretch at 628-695 (GKNYTAKVRK…NDGRVRASRK (68 aa)) folds into the S1 motif domain. Residues 705–750 (EWDPADTARPPRKPRDRDDRGDRGGRGDRGDRGGRNGRGGDRRDRR) form a disordered region. Basic and acidic residues predominate over residues 717–750 (KPRDRDDRGDRGGRGDRGDRGGRNGRGGDRRDRR).

Belongs to the polyribonucleotide nucleotidyltransferase family. Mg(2+) serves as cofactor.

It localises to the cytoplasm. It carries out the reaction RNA(n+1) + phosphate = RNA(n) + a ribonucleoside 5'-diphosphate. In terms of biological role, involved in mRNA degradation. Catalyzes the phosphorolysis of single-stranded polyribonucleotides processively in the 3'- to 5'-direction. The protein is Polyribonucleotide nucleotidyltransferase of Oleidesulfovibrio alaskensis (strain ATCC BAA-1058 / DSM 17464 / G20) (Desulfovibrio alaskensis).